A 551-amino-acid polypeptide reads, in one-letter code: Probable 4-coumarate--CoA ligase 3 (551 aa).

ATP is bound by residues Ser205, Ser206, Gly207, Thr208, Thr209, and Lys213. Phe253 is a binding site for (E)-4-coumaroyl-AMP. Lys274 is a binding site for CoA. The interval 276–346 (EPVRFLELIK…RFKGRLVIKQ (71 aa)) is SBD1. The (E)-4-coumaroyl-AMP site is built by Ala323, Gln346, Gly347, and Thr351. ATP is bound by residues Gln346, Gly347, Thr351, Asp430, and Arg445. Positions 347–409 (GYGATELSPC…IKGPNVMLGY (63 aa)) are SBD2. (E)-4-coumaroyl-AMP-binding residues include Lys447 and Lys451. CoA contacts are provided by Lys453 and Gly454. Lys537 is a binding site for ATP.

It belongs to the ATP-dependent AMP-binding enzyme family. Requires Mg(2+) as cofactor.

It catalyses the reaction (E)-4-coumarate + ATP + CoA = (E)-4-coumaroyl-CoA + AMP + diphosphate. The catalysed reaction is (E)-4-coumarate + ATP + H(+) = (E)-4-coumaroyl-AMP + diphosphate. The enzyme catalyses (E)-4-coumaroyl-AMP + CoA = (E)-4-coumaroyl-CoA + AMP + H(+). It participates in phytoalexin biosynthesis; 3,4',5-trihydroxystilbene biosynthesis; 3,4',5-trihydroxystilbene from trans-4-coumarate: step 1/2. Carboxylate--CoA ligase that may use 4-coumarate as substrate. Follows a two-step reaction mechanism, wherein the carboxylate substrate first undergoes adenylation by ATP, followed by a thioesterification in the presence of CoA to yield the final CoA thioester. In Dictyostelium discoideum (Social amoeba), this protein is Probable 4-coumarate--CoA ligase 3 (4cl3).